Consider the following 614-residue polypeptide: MNAPDKFASLLALTREPFPASTKSYLAGSQPGLRVPVRDIQLTNGEVVSVYDTSGPYTDPAVQIDVRKGLASVRGEWIAARGDTEGYEGRVRKALDDGQKAEDGDRLAQLRAEAAALQRQPLRARSGANVTQMHYAKKGIVTPEMEYVALRENGRREWMQQYMQDAAREQRLAGNPLGASIPKIITPEFVRDEVARGRAIIPANINHPEVEPMAIGRNFKVKINANIGNSAVTSSIEEEVEKLVWAIRWGADNVMDLSTGKNIHTTRDWIVRNSPVPIGTVPIYQALEKVGGIAEDLTWEIFRDTLIEQAEQGVDYFTIHAGVRLAYIQLTAARRTGIVSRGGSIMAKWCMAHHKESFLYTHFEDICDIMKAYDVAFSLGDGLRPGCASDANDEAQFAELHTLGELTQIAWKHDVQTMIEGPGHVPMHMIQANMTEQLKTCHEAPFYTLGPLTIDIAPGYDHIASAIGAAMIGWMGTAMLCYVTPKEHLGLPDRDDVKQGIIAYKIAAHAADVAKGHPGARARDDALSQARFDFRWQDQFNLGLDPDTAKEYHDETLPKDSAKVAHFCSMCGPKFCSMKITQEVREFAQQGLQSKAEEFNRTGGELYVPIHRAD.

Residues N226, M255, Y284, H320, 340–342 (SRG), 381–384 (DGLR), and E420 contribute to the substrate site. H424 provides a ligand contact to Zn(2+). Y447 serves as a coordination point for substrate. H488 lines the Zn(2+) pocket. Positions 568, 571, and 576 each coordinate [4Fe-4S] cluster.

The protein belongs to the ThiC family. In terms of assembly, homodimer. It depends on [4Fe-4S] cluster as a cofactor.

It catalyses the reaction 5-amino-1-(5-phospho-beta-D-ribosyl)imidazole + S-adenosyl-L-methionine = 4-amino-2-methyl-5-(phosphooxymethyl)pyrimidine + CO + 5'-deoxyadenosine + formate + L-methionine + 3 H(+). It functions in the pathway cofactor biosynthesis; thiamine diphosphate biosynthesis. Catalyzes the synthesis of the hydroxymethylpyrimidine phosphate (HMP-P) moiety of thiamine from aminoimidazole ribotide (AIR) in a radical S-adenosyl-L-methionine (SAM)-dependent reaction. This Acidovorax ebreus (strain TPSY) (Diaphorobacter sp. (strain TPSY)) protein is Phosphomethylpyrimidine synthase.